Here is a 190-residue protein sequence, read N- to C-terminus: RNA pyrophosphohydrolase (190 aa).

The Nudix hydrolase domain maps to 6–149 (GYRPNVGIVL…KRSVYARALC (144 aa)). Residues 38 to 59 (GGMHSDETPVEAMYRELNEETG) carry the Nudix box motif.

The protein belongs to the Nudix hydrolase family. RppH subfamily. Requires a divalent metal cation as cofactor.

Functionally, accelerates the degradation of transcripts by removing pyrophosphate from the 5'-end of triphosphorylated RNA, leading to a more labile monophosphorylated state that can stimulate subsequent ribonuclease cleavage. This Xylella fastidiosa (strain Temecula1 / ATCC 700964) protein is RNA pyrophosphohydrolase.